We begin with the raw amino-acid sequence, 432 residues long: Methylenetetrahydrofolate--tRNA-(uracil-5-)-methyltransferase TrmFO (432 aa).

7 to 12 (GAGLAG) is an FAD binding site.

It belongs to the MnmG family. TrmFO subfamily. The cofactor is FAD.

The protein resides in the cytoplasm. The catalysed reaction is uridine(54) in tRNA + (6R)-5,10-methylene-5,6,7,8-tetrahydrofolate + NADH + H(+) = 5-methyluridine(54) in tRNA + (6S)-5,6,7,8-tetrahydrofolate + NAD(+). It carries out the reaction uridine(54) in tRNA + (6R)-5,10-methylene-5,6,7,8-tetrahydrofolate + NADPH + H(+) = 5-methyluridine(54) in tRNA + (6S)-5,6,7,8-tetrahydrofolate + NADP(+). Catalyzes the folate-dependent formation of 5-methyl-uridine at position 54 (M-5-U54) in all tRNAs. This chain is Methylenetetrahydrofolate--tRNA-(uracil-5-)-methyltransferase TrmFO, found in Anoxybacillus flavithermus (strain DSM 21510 / WK1).